The following is a 402-amino-acid chain: Beta-peptidyl aminopeptidase BapA (402 aa).

An N-terminal signal peptide occupies residues methionine 1–alanine 29. The Nucleophile role is filled by serine 279. Catalysis depends on proton donor/acceptor residues serine 317 and glutamate 319.

The protein belongs to the peptidase S58 family. In terms of assembly, heterooctamer of 4 heterodimers ((alpha:beta)4); each heterodimer is composed of an alpha subunit and a beta subunit processed from the same precursor. Autoproteolytic processing to generate the alpha and beta subunit is required for self-activation and is proposed to use a similar mechanism as substrate cleavage.

Its subcellular location is the periplasm. It carries out the reaction Cleaves N-terminal beta-homoamino acids from peptides composed of 2 to 6 amino acids.. Inhibited by AEBSF (4-(2-aminoethyl)benzenesulfonyl fluoride, Pefabloc SC), ampicillin and AMP(hyd) (ampillicin-derived penicilloic acid). In terms of biological role, beta-aminopeptidase that can cleave synthetic beta-peptides which consist of backbone-elongated beta-amino acid residues that are not processed by common proteolytic enzymes. Can cleave the beta-peptides beta-homoVal-beta-homoAla-beta-homoLeu and beta-homoAla-beta-homoLeu. Requires a beta-amino acid at the N-terminus of peptide substrates and cleaves the peptide bond between the N-terminal beta-amino acid and the amino acid at the second position of tripeptidic substrates of the general structure H-betahXaa-Ile-betahTyr-OH according to the following preferences with regard to the side chain of the N-terminal beta-amino acid: aliphatic and aromatic &gt; OH-containing &gt; hydrogen, basic and polar. This Sphingosinicella xenopeptidilytica protein is Beta-peptidyl aminopeptidase BapA.